Consider the following 330-residue polypeptide: Growth hormone-regulated TBC protein 6 (330 aa).

A Rab-GAP TBC domain is found at 78–256 (GIPHTFRKEL…RLWDCLIYEG (179 aa)).

The protein is Growth hormone-regulated TBC protein 6 (tbc-6) of Caenorhabditis elegans.